The sequence spans 206 residues: Enterobactin synthase component D (206 aa).

3 residues coordinate Mg(2+): D107, E109, and E152.

Belongs to the P-Pant transferase superfamily. EntD family. As to quaternary structure, entB, EntD, EntE, and EntF form a multienzyme complex called enterobactin synthase. Mg(2+) is required as a cofactor.

The protein resides in the membrane. It carries out the reaction apo-[aryl-carrier protein] + CoA = holo-[aryl-carrier protein] + adenosine 3',5'-bisphosphate + H(+). The catalysed reaction is apo-[peptidyl-carrier protein] + CoA = holo-[peptidyl-carrier protein] + adenosine 3',5'-bisphosphate + H(+). The protein operates within siderophore biosynthesis; enterobactin biosynthesis. In terms of biological role, involved in the biosynthesis of the siderophore enterobactin (enterochelin), which is a macrocyclic trimeric lactone of N-(2,3-dihydroxybenzoyl)-serine. The serine trilactone serves as a scaffolding for the three catechol functionalities that provide hexadentate coordination for the tightly ligated iron(2+) atoms. Plays an essential role in the assembly of the enterobactin by catalyzing the transfer of the 4'-phosphopantetheine (Ppant) moiety from coenzyme A to the apo-domains of both EntB (ArCP domain) and EntF (PCP domain) to yield their holo-forms which make them competent for the activation of 2,3-dihydroxybenzoate (DHB) and L-serine, respectively. The protein is Enterobactin synthase component D of Escherichia coli O157:H7.